The following is a 248-amino-acid chain: N-acylneuraminate-9-phosphatase (248 aa).

Residue Asp12 coordinates Mg(2+). The phosphate site is built by Leu13, Asp14, Thr131, Asn132, and Lys164. Mg(2+) is bound at residue Asp14. Residue Asp189 coordinates Mg(2+).

This sequence belongs to the HAD-like hydrolase superfamily. NANP family. Mg(2+) is required as a cofactor.

The enzyme catalyses N-acetylneuraminate 9-phosphate + H2O = N-acetylneuraminate + phosphate. The catalysed reaction is N-glycoloylneuraminate 9-phosphate + H2O = N-glycoloylneuraminate + phosphate. It functions in the pathway amino-sugar metabolism; N-acetylneuraminate biosynthesis. Its activity is regulated as follows. Inhibited by calcium. Inhibited by vanadate, sodium orthovanadate and phosphonate. In terms of biological role, catalyzes the dephosphorylation of N-acylneuraminate 9-phosphate (Neu5Ac-9-P) to N-acetylneuraminic acid (Neu5Ac or sialic acid). Can also use N-glycoloylneuraminate 9-phosphate as substrate. The polypeptide is N-acylneuraminate-9-phosphatase (Homo sapiens (Human)).